We begin with the raw amino-acid sequence, 289 residues long: MLKNLFRKTKYITVSQKNIESYKRENTPTIPDGMWVKCNKCGDILYQNDLEKNYMVCNLCGNHFRIGVKERIKYLFDKDTFKEWDYKIKTENPLDFKGYDEKIEHIKEKTNLSEAVTTGKGKIAGMEAVVCIMDSKFMMGSMGCVVGEKITRAIERAIKLRLPVIIFTASGGARMQEGILSLMQMAKVSSALAKLDEEGLLYVCVLTDPTTGGVTASFAMLGDIILAEPDGLIGFAGKRVIEQTINEKLPEDFQKSEFLLEHGFIDKIVPRSDLRKVLAKLINMHQNSF.

Residues 34–289 (MWVKCNKCGD…KLINMHQNSF (256 aa)) form the CoA carboxyltransferase N-terminal domain. Positions 38, 41, 57, and 60 each coordinate Zn(2+). Residues 38 to 60 (CNKCGDILYQNDLEKNYMVCNLC) form a C4-type zinc finger.

The protein belongs to the AccD/PCCB family. Acetyl-CoA carboxylase is a heterohexamer composed of biotin carboxyl carrier protein (AccB), biotin carboxylase (AccC) and two subunits each of ACCase subunit alpha (AccA) and ACCase subunit beta (AccD). The cofactor is Zn(2+).

Its subcellular location is the cytoplasm. The enzyme catalyses N(6)-carboxybiotinyl-L-lysyl-[protein] + acetyl-CoA = N(6)-biotinyl-L-lysyl-[protein] + malonyl-CoA. It functions in the pathway lipid metabolism; malonyl-CoA biosynthesis; malonyl-CoA from acetyl-CoA: step 1/1. Its function is as follows. Component of the acetyl coenzyme A carboxylase (ACC) complex. Biotin carboxylase (BC) catalyzes the carboxylation of biotin on its carrier protein (BCCP) and then the CO(2) group is transferred by the transcarboxylase to acetyl-CoA to form malonyl-CoA. The polypeptide is Acetyl-coenzyme A carboxylase carboxyl transferase subunit beta (Clostridium botulinum (strain Langeland / NCTC 10281 / Type F)).